We begin with the raw amino-acid sequence, 92 residues long: Small ribosomal subunit protein uS19c (92 aa).

Belongs to the universal ribosomal protein uS19 family.

It is found in the plastid. It localises to the chloroplast. Functionally, protein S19 forms a complex with S13 that binds strongly to the 16S ribosomal RNA. In Calycanthus floridus var. glaucus (Eastern sweetshrub), this protein is Small ribosomal subunit protein uS19c.